The sequence spans 126 residues: Large ribosomal subunit protein bL12 (126 aa).

The protein belongs to the bacterial ribosomal protein bL12 family. Homodimer. Part of the ribosomal stalk of the 50S ribosomal subunit. Forms a multimeric L10(L12)X complex, where L10 forms an elongated spine to which 2 to 4 L12 dimers bind in a sequential fashion. Binds GTP-bound translation factors.

Functionally, forms part of the ribosomal stalk which helps the ribosome interact with GTP-bound translation factors. Is thus essential for accurate translation. The polypeptide is Large ribosomal subunit protein bL12 (Koribacter versatilis (strain Ellin345)).